The following is a 701-amino-acid chain: Mediator of RNA polymerase II transcription subunit 25 (701 aa).

Disordered stretches follow at residues 277-388 (AAQK…GAQQ) and 580-617 (AAATGNQQAPVTGAPPNQVQGQAQAPGGGMLRLQNPGA). The segment covering 286-306 (ANQQQKNRFGQISTPPFSQSP) has biased composition (polar residues). Low complexity-rich tracts occupy residues 314–367 (PSLS…NNQQ) and 593–604 (APPNQVQGQAQA). The short motif at 621–625 (LRSLL) is the LXXLL motif element. A disordered region spans residues 650-689 (APGGGAQMQPQWRQPHQGPLMVPTGPRGPVTQNPGMPSVS). Over residues 679–689 (VTQNPGMPSVS) the composition is skewed to polar residues.

This sequence belongs to the Mediator complex subunit 25 family. As to quaternary structure, component of the Mediator complex.

Its subcellular location is the nucleus. Functionally, component of the Mediator complex, a coactivator involved in the regulated transcription of nearly all RNA polymerase II-dependent genes. Mediator functions as a bridge to convey information from gene-specific regulatory proteins to the basal RNA polymerase II transcription machinery. Mediator is recruited to promoters by direct interactions with regulatory proteins and serves as a scaffold for the assembly of a functional preinitiation complex with RNA polymerase II and the general transcription factors. This Danio rerio (Zebrafish) protein is Mediator of RNA polymerase II transcription subunit 25 (med25).